Reading from the N-terminus, the 202-residue chain is Translation initiation factor IF-3 (202 aa).

This sequence belongs to the IF-3 family. Monomer.

The protein localises to the cytoplasm. In terms of biological role, IF-3 binds to the 30S ribosomal subunit and shifts the equilibrium between 70S ribosomes and their 50S and 30S subunits in favor of the free subunits, thus enhancing the availability of 30S subunits on which protein synthesis initiation begins. The protein is Translation initiation factor IF-3 of Prochlorococcus marinus (strain NATL2A).